The following is a 287-amino-acid chain: Phospholipase A and acyltransferase 5 (287 aa).

2 disordered regions span residues 48–72 (PKQI…ASSQ) and 86–138 (DRGL…SNQK). Polar residues-rich tracts occupy residues 49–72 (KQIS…ASSQ) and 128–138 (LKNQAAESNQK). Residues 144–257 (LIEIFRIGYE…LRYGVPRSQQ (114 aa)) form the LRAT domain. Residues His154 and His166 contribute to the active site. Residue Cys241 is the Acyl-thioester intermediate of the active site.

The protein belongs to the H-rev107 family. In terms of tissue distribution, expressed in testis.

Its subcellular location is the cytoplasm. The protein resides in the cytosol. It carries out the reaction a 1,2-diacyl-sn-glycero-3-phosphocholine + H2O = a 1-acyl-sn-glycero-3-phosphocholine + a fatty acid + H(+). The enzyme catalyses a 1,2-diacyl-sn-glycero-3-phosphocholine + H2O = a 2-acyl-sn-glycero-3-phosphocholine + a fatty acid + H(+). It catalyses the reaction 1-hexadecanoyl-2-(5Z,8Z,11Z,14Z-eicosatetraenoyl)-sn-glycero-3-phosphocholine + 1,2-di-(9Z-octadecenoyl)-sn-glycero-3-phosphoethanolamine = N-(5Z,8Z,11Z,14Z-eicosatetraenoyl)-1,2-di-(9Z-octadecenoyl)-sn-glycero-3-phosphoethanolamine + 1-hexadecanoyl-sn-glycero-3-phosphocholine + H(+). The catalysed reaction is 1,2-di-(9Z-octadecenoyl)-sn-glycero-3-phosphoethanolamine + 1,2-dihexadecanoyl-sn-glycero-3-phosphocholine = N-hexadecanoyl-1,2-di-(9Z-octadecenoyl)-sn-glycero-3-phosphoethanolamine + 1-hexadecanoyl-sn-glycero-3-phosphocholine + H(+). It carries out the reaction 1,2-di-(9Z-octadecenoyl)-sn-glycero-3-phosphoethanolamine + 1,2-dihexadecanoyl-sn-glycero-3-phosphocholine = N-hexadecanoyl-1,2-di-(9Z-octadecenoyl)-sn-glycero-3-phosphoethanolamine + 2-hexadecanoyl-sn-glycero-3-phosphocholine + H(+). The enzyme catalyses a 1,2-diacyl-sn-glycero-3-phosphoethanolamine + a 1,2-diacyl-sn-glycero-3-phosphocholine = an N-acyl-1,2-diacyl-sn-glycero-3-phosphoethanolamine + a 1-acyl-sn-glycero-3-phosphocholine + H(+). It catalyses the reaction a 1,2-diacyl-sn-glycero-3-phosphoethanolamine + a 1,2-diacyl-sn-glycero-3-phosphocholine = an N-acyl-1,2-diacyl-sn-glycero-3-phosphoethanolamine + a 2-acyl-sn-glycero-3-phosphocholine + H(+). The catalysed reaction is 1-hexadecanoyl-2-(9Z-octadecenoyl)-sn-glycero-3-phosphocholine + 1,2-di-(9Z-octadecenoyl)-sn-glycero-3-phosphoethanolamine = N,1,2-tri-(9Z-octadecenoyl)-sn-glycero-3-phosphoethanolamine + 1-hexadecanoyl-sn-glycero-3-phosphocholine + H(+). Functionally, exhibits both phospholipase A1/2 and acyltransferase activities. Shows phospholipase A1 (PLA1) and A2 (PLA2) activity, catalyzing the calcium-independent release of fatty acids from the sn-1 or sn-2 position of glycerophospholipids. Shows N-acyltransferase activity, catalyzing the calcium-independent transfer of a fatty acyl group at the sn-1 position of phosphatidylcholine (PC) and other glycerophospholipids to the primary amine of phosphatidylethanolamine (PE), forming N-acylphosphatidylethanolamine (NAPE), which serves as precursor for N-acylethanolamines (NAEs). The sequence is that of Phospholipase A and acyltransferase 5 from Rattus norvegicus (Rat).